Reading from the N-terminus, the 72-residue chain is Translation initiation factor IF-1 (72 aa).

Residues 1-72 (MSKEDMIEFS…TKGRITFRFK (72 aa)) form the S1-like domain.

The protein belongs to the IF-1 family. As to quaternary structure, component of the 30S ribosomal translation pre-initiation complex which assembles on the 30S ribosome in the order IF-2 and IF-3, IF-1 and N-formylmethionyl-tRNA(fMet); mRNA recruitment can occur at any time during PIC assembly.

The protein resides in the cytoplasm. Its function is as follows. One of the essential components for the initiation of protein synthesis. Stabilizes the binding of IF-2 and IF-3 on the 30S subunit to which N-formylmethionyl-tRNA(fMet) subsequently binds. Helps modulate mRNA selection, yielding the 30S pre-initiation complex (PIC). Upon addition of the 50S ribosomal subunit IF-1, IF-2 and IF-3 are released leaving the mature 70S translation initiation complex. This is Translation initiation factor IF-1 from Granulibacter bethesdensis (strain ATCC BAA-1260 / CGDNIH1).